Consider the following 771-residue polypeptide: Post-GPI attachment to proteins factor 6 (771 aa).

An N-terminal signal peptide occupies residues 1–34 (MGRAGTGTGGEAVAAVVAGPLLLLLLARPPPASA). At 35–545 (GYSGKSEVGL…STAQTVAQQR (511 aa)) the chain is on the extracellular side. A glycan (N-linked (GlcNAc...) asparagine) is linked at Asn-144. A disordered region spans residues 322-343 (FNASSGLLSPSPDHQDLGRSGR). Residues 334 to 343 (DHQDLGRSGR) are compositionally biased toward basic and acidic residues. N-linked (GlcNAc...) asparagine glycans are attached at residues Asn-407 and Asn-431. In terms of domain architecture, EGF-like spans 497 to 533 (PCLNDCGPYGQCLLLRRHSYLYASCSCKAGWRGWSCT). 3 disulfides stabilise this stretch: Cys-498–Cys-508, Cys-502–Cys-521, and Cys-523–Cys-532. Residues 546–566 (AATLLLTLSNLMFLAPIAVSV) form a helical membrane-spanning segment. At 567 to 568 (RR) the chain is on the cytoplasmic side. A helical membrane pass occupies residues 569–589 (FFLVEASVYAYTMFFSTFYHA). The Extracellular portion of the chain corresponds to 590–605 (CDQPGEAVLCILSYDT). A helical membrane pass occupies residues 606-626 (LQYCDFLGSGAAIWVTILCMA). Over 627–629 (RLK) the chain is Cytoplasmic. The chain crosses the membrane as a helical span at residues 630–650 (TVLKYVLFLLGTLVIAMSLQL). The Extracellular segment spans residues 651–653 (DRR). The chain crosses the membrane as a helical span at residues 654 to 674 (GMWNMLGPCLFAFVIMASMWA). The Cytoplasmic portion of the chain corresponds to 675-690 (YRCGHRRQCYPTSWQR). Residues 691 to 711 (WAFYLLPGVSMASVGIAIYTS) form a helical membrane-spanning segment. Topologically, residues 712–717 (MMTSDN) are extracellular. The chain crosses the membrane as a helical span at residues 718-738 (YYYTHSIWHILLAGSAALLLP). Residues 739–771 (PPDQPAEPWACSQKFPCHYQICKNDREELYAVT) lie on the Cytoplasmic side of the membrane.

This sequence belongs to the TMEM8 family. Post-translationally, glycosylated. In terms of tissue distribution, expressed in pancreas, placenta, spleen, liver, kidney, bone marrow, peripheral blood leukocytes and tonsil.

It is found in the cell membrane. Its subcellular location is the lysosome membrane. It catalyses the reaction a 1,2-diacyl-sn-glycero-3-phosphocholine + H2O = a 1-acyl-sn-glycero-3-phosphocholine + a fatty acid + H(+). In terms of biological role, involved in the lipid remodeling steps of GPI-anchor maturation. Lipid remodeling steps consist in the generation of 2 saturated fatty chains at the sn-2 position of GPI-anchor proteins (GPI-AP). Has phospholipase A2 activity that removes an acyl-chain at the sn-2 position of GPI-anchors during the remodeling of GPI. Required for the shedding of the GPI-AP CRIPTO, but not CFC1, at the cell surface. Shedding of CRIPTO modulates Nodal signaling by allowing soluble CRIPTO to act as a Nodal coreceptor on other cells. Also indirectly involved in the translocation of RAC1 from the cytosol to the plasma membrane by maintaining the steady state amount of CAV1-enriched plasma membrane subdomains, stabilizing RAC1 at the plasma membrane. In contrast to myomaker (TMEM8C), has no fusogenic activity. The chain is Post-GPI attachment to proteins factor 6 from Homo sapiens (Human).